We begin with the raw amino-acid sequence, 267 residues long: Corrinoid adenosyltransferase EutT (267 aa).

A divalent metal cation is bound by residues cysteine 80 and cysteine 83.

The protein belongs to the Cob(I)alamin adenosyltransferase family. EutT subfamily. In terms of assembly, homodimer. A divalent metal cation is required as a cofactor.

The protein resides in the bacterial microcompartment. The enzyme catalyses 2 cob(II)alamin + reduced [electron-transfer flavoprotein] + 2 ATP + 2 H2O = 2 adenosylcob(III)alamin + oxidized [electron-transfer flavoprotein] + 2 phosphate + 2 diphosphate + 3 H(+). It catalyses the reaction 2 cob(II)inamide + reduced [electron-transfer flavoprotein] + 2 ATP + 2 H2O = 2 adenosylcob(III)inamide + oxidized [electron-transfer flavoprotein] + 2 phosphate + 2 diphosphate + 3 H(+). The protein operates within amine and polyamine degradation; ethanolamine degradation. Converts cyanocobalamin (CN-B12) to adenosylcobalamin (AdoCbl), the inducer of the eut operon. Is not active on cobinamide nor other intermediates in the adenosylcobalamin synthetic pathway. Allows full induction of the eut operon. Can use ADP, CTP and dATP in place of ATP, and cobinamide in place of cobalamin, none are as efficiently used as ATP and cobalamin. Its function is as follows. Expression of the eut operon allows this bacteria to use ethanolamine (EA) as a carbon, nitrogen and energy source. It relies on cobalamin (vitamin B12) both as a cofactor for the ethanolamine ammonia-lyase (EAL) activity and to induce the operon. EA enhances bacterial survival in macrophages in a concentration-dependent manner, suggesting it is an important nutrient during infection. The sequence is that of Corrinoid adenosyltransferase EutT from Salmonella typhimurium (strain LT2 / SGSC1412 / ATCC 700720).